We begin with the raw amino-acid sequence, 325 residues long: Protease HtpX homolog (325 aa).

Residues I20–M40 form a helical membrane-spanning segment. Position 130 (H130) interacts with Zn(2+). E131 is a catalytic residue. H134 is a binding site for Zn(2+). 2 consecutive transmembrane segments (helical) span residues I145 to G165 and V173 to V193. E202 is a binding site for Zn(2+). The segment at A288–S325 is disordered. Low complexity predominate over residues R306–S325.

It belongs to the peptidase M48B family. Zn(2+) serves as cofactor.

Its subcellular location is the cell inner membrane. The chain is Protease HtpX homolog from Brucella suis (strain ATCC 23445 / NCTC 10510).